The following is a 283-amino-acid chain: NAD kinase (283 aa).

The Proton acceptor role is filled by D66. NAD(+)-binding positions include 66 to 67, 137 to 138, R165, D167, and 178 to 183; these read DG, ND, and TGYSLS.

This sequence belongs to the NAD kinase family. The cofactor is a divalent metal cation.

It localises to the cytoplasm. It catalyses the reaction NAD(+) + ATP = ADP + NADP(+) + H(+). In terms of biological role, involved in the regulation of the intracellular balance of NAD and NADP, and is a key enzyme in the biosynthesis of NADP. Catalyzes specifically the phosphorylation on 2'-hydroxyl of the adenosine moiety of NAD to yield NADP. The protein is NAD kinase of Chloroherpeton thalassium (strain ATCC 35110 / GB-78).